The chain runs to 108 residues: uncharacterized protein (108 aa).

This is an uncharacterized protein from Microplitis demolitor bracovirus (isolate Webb) (MdBV).